The primary structure comprises 117 residues: Large ribosomal subunit protein bL19 (117 aa).

It belongs to the bacterial ribosomal protein bL19 family.

In terms of biological role, this protein is located at the 30S-50S ribosomal subunit interface and may play a role in the structure and function of the aminoacyl-tRNA binding site. The sequence is that of Large ribosomal subunit protein bL19 from Shewanella woodyi (strain ATCC 51908 / MS32).